A 213-amino-acid polypeptide reads, in one-letter code: Type II restriction enzyme BamHI (213 aa).

The Mg(2+) site is built by E77, D94, E111, and F112. The Proton acceptor role is filled by E113.

As to quaternary structure, homodimer. It depends on Mg(2+) as a cofactor.

The enzyme catalyses Endonucleolytic cleavage of DNA to give specific double-stranded fragments with terminal 5'-phosphates.. Functionally, a P subtype restriction enzyme that recognizes the double-stranded sequence 5'-GGATCC-3' and cleaves after G-1. In Bacillus amyloliquefaciens (Bacillus velezensis), this protein is Type II restriction enzyme BamHI.